We begin with the raw amino-acid sequence, 211 residues long: Uracil phosphoribosyltransferase (211 aa).

5-phospho-alpha-D-ribose 1-diphosphate is bound by residues Arg78, Arg103, and 130 to 138; that span reads DPMLATGGT. Uracil is bound by residues Ile196 and 201–203; that span reads GDA. Asp202 is a 5-phospho-alpha-D-ribose 1-diphosphate binding site.

This sequence belongs to the UPRTase family. Mg(2+) is required as a cofactor.

It carries out the reaction UMP + diphosphate = 5-phospho-alpha-D-ribose 1-diphosphate + uracil. It functions in the pathway pyrimidine metabolism; UMP biosynthesis via salvage pathway; UMP from uracil: step 1/1. Its activity is regulated as follows. Allosterically activated by GTP. Functionally, catalyzes the conversion of uracil and 5-phospho-alpha-D-ribose 1-diphosphate (PRPP) to UMP and diphosphate. The protein is Uracil phosphoribosyltransferase of Beutenbergia cavernae (strain ATCC BAA-8 / DSM 12333 / CCUG 43141 / JCM 11478 / NBRC 16432 / NCIMB 13614 / HKI 0122).